A 208-amino-acid chain; its full sequence is Urease accessory protein UreE (208 aa).

Positions 145-195 (AEAHGHGQAHAHDHHDHDHHDHGHDHAHHDHAHHDHAHDHHGHDHAHDHAH) are disordered.

The protein belongs to the UreE family.

The protein localises to the cytoplasm. In terms of biological role, involved in urease metallocenter assembly. Binds nickel. Probably functions as a nickel donor during metallocenter assembly. The chain is Urease accessory protein UreE from Azorhizobium caulinodans (strain ATCC 43989 / DSM 5975 / JCM 20966 / LMG 6465 / NBRC 14845 / NCIMB 13405 / ORS 571).